The following is a 189-amino-acid chain: dCTP deaminase (189 aa).

DCTP is bound by residues K112 to R117, T136 to E138, Q157, Y171, and Q181. E138 serves as the catalytic Proton donor/acceptor.

This sequence belongs to the dCTP deaminase family. In terms of assembly, homotrimer.

The enzyme catalyses dCTP + H2O + H(+) = dUTP + NH4(+). It functions in the pathway pyrimidine metabolism; dUMP biosynthesis; dUMP from dCTP (dUTP route): step 1/2. Its function is as follows. Catalyzes the deamination of dCTP to dUTP. This chain is dCTP deaminase, found in Xanthomonas euvesicatoria pv. vesicatoria (strain 85-10) (Xanthomonas campestris pv. vesicatoria).